A 313-amino-acid chain; its full sequence is tRNA (guanine-N(7)-)-methyltransferase (313 aa).

The S-adenosyl-L-methionine site is built by Glu-33, Glu-58, and Asp-85. Residues Lys-112, Asp-144, and Thr-177–Glu-180 each bind substrate.

This sequence belongs to the class I-like SAM-binding methyltransferase superfamily. TrmB family.

It catalyses the reaction guanosine(46) in tRNA + S-adenosyl-L-methionine = N(7)-methylguanosine(46) in tRNA + S-adenosyl-L-homocysteine. It functions in the pathway tRNA modification; N(7)-methylguanine-tRNA biosynthesis. Catalyzes the formation of N(7)-methylguanine at position 46 (m7G46) in tRNA. The protein is tRNA (guanine-N(7)-)-methyltransferase of Thermotoga maritima (strain ATCC 43589 / DSM 3109 / JCM 10099 / NBRC 100826 / MSB8).